The chain runs to 120 residues: Glycine cleavage system H protein (120 aa).

The Lipoyl-binding domain maps to 17–99 (VATVGITAHA…QGAGWLYRLK (83 aa)). Lys-58 carries the N6-lipoyllysine modification.

The protein belongs to the GcvH family. In terms of assembly, the glycine cleavage system is composed of four proteins: P, T, L and H. It depends on (R)-lipoate as a cofactor.

The glycine cleavage system catalyzes the degradation of glycine. The H protein shuttles the methylamine group of glycine from the P protein to the T protein. In Methylorubrum populi (strain ATCC BAA-705 / NCIMB 13946 / BJ001) (Methylobacterium populi), this protein is Glycine cleavage system H protein.